We begin with the raw amino-acid sequence, 606 residues long: Mitogen-activated protein kinase kinase kinase 7 (606 aa).

The tract at residues 1–300 is interaction with MAPK8IP1; that stretch reads MSTASAASSS…FPGADEPLQY (300 aa). Residues 36–291 form the Protein kinase domain; it reads IEVEEVVGRG…KIMTHLMRYF (256 aa). Residues 42–50 and lysine 63 each bind ATP; that span reads VGRGAFGVV. Lysine 72 is covalently cross-linked (Glycyl lysine isopeptide (Lys-Gly) (interchain with G-Cter in ubiquitin)). The Proton acceptor role is filled by aspartate 156. Lysine 158 participates in a covalent cross-link: Glycyl lysine isopeptide (Lys-Gly) (interchain with G-Cter in ubiquitin). Phosphothreonine; by autocatalysis is present on residues threonine 184 and threonine 187. At serine 192 the chain carries Phosphoserine; by autocatalysis. Lysine 209 is covalently cross-linked (Glycyl lysine isopeptide (Lys-Gly) (interchain with G-Cter in ubiquitin)). Disordered stretches follow at residues 301–338 and 354–391; these read PCQYSDEGQSNSATSTGSFMDIASTNTSNKSDTNMEQV and KNQAKQQSDSGRLSLGASRGSSVESLPPTSEGKRMSAD. A compositionally biased stretch (polar residues) spans 306–338; it reads DEGQSNSATSTGSFMDIASTNTSNKSDTNMEQV. Over residues 361-375 the composition is skewed to low complexity; it reads SDSGRLSLGASRGSS. Residues serine 367, serine 389, and serine 439 each carry the phosphoserine modification. The span at 443 to 452 shows a compositional bias: polar residues; it reads LTVTGTEPGQ. The segment at 443 to 492 is disordered; sequence LTVTGTEPGQVSSRSSSPSVRMITTSGPTSEKPARSLPWTPDDSTDTNGS. Low complexity predominate over residues 453–463; that stretch reads VSSRSSSPSVR. Phosphoserine is present on serine 455.

It belongs to the protein kinase superfamily. STE Ser/Thr protein kinase family. MAP kinase kinase kinase subfamily. As to quaternary structure, can form homodimer. Binds both upstream activators and downstream substrates in multimolecular complexes. Interacts with TAB1/MAP3K7IP1, TAB2/MAP3K7IP2 and TAB3/MAP3K7IP3. Identified in the TRIKA2 complex composed of MAP3K7/TAK1, TAB1/MAP3K7IP1 and TAB2/MAP3K7IP2. Interacts with PPM1L and PPM1B/PP2CB. Interaction with PP2A and PPP6C leads to its repressed activity. Interacts with TRAF6 and TAB1/MAP3K7IP1; during IL-1 signaling. Interacts with TAOK1 and TAOK2; interaction with TAOK2 interferes with MAP3K7 interaction with IKKA, thus preventing NF-kappa-B activation. Interacts with DYNC2I2 (via WD domains). Interacts with CYLD and RBCK1. Interacts with TGFBR1; induces MAP3K7/TAK1 activation by TRAF6. Interacts with MAPK8IP1 and SMAD6. Interacts with isoform 1 of VRK2. Interacts with DAB2; the interaction is induced by TGF-beta stimulation and may mediate TGF-beta stimulated JNK activation. Interacts with TRIM5. Part of a complex containing ITCH, NDFIP1 and MAP3K7. Interacts with PLEKHM1 (via N- and C-terminus). Found in a complex with SH3RF1, RAC2, MAP2K7/MKK7, MAPK8IP1/JIP1, MAPK8/JNK1 and MAPK9/JNK2. Interacts with SASH1. Interacts with RIPK1. It depends on Mg(2+) as a cofactor. In terms of processing, association with TAB1/MAP3K7IP1 promotes autophosphorylation at Ser-192 and subsequent activation. Association with TAB2/MAP3K7IP2, itself associated with free unanchored Lys-63 polyubiquitin chain, promotes autophosphorylation and subsequent activation of MAP3K7. Dephosphorylation at Ser-192 by PPM1B/PP2CB and at Thr-187 by PP2A and PPP6C leads to inactivation. Deubiquitinated by USP19; leading to negative regulation of TNF-alpha- and IL-1beta-triggered NF-kappa-B activation. 'Lys-48'-linked polyubiquitination at Lys-72 is induced by TNFalpha, and leads to proteasomal degradation. Undergoes 'Lys-48'-linked polyubiquitination catalyzed by ITCH. 'Lys-63'-linked polyubiquitination at Lys-158 by TRIM8 does not lead to proteasomal degradation but contributes to autophosphorylation and activation. Deubiquitinated by CYLD, a protease that selectively cleaves 'Lys-63'-linked ubiquitin chains.

It is found in the cytoplasm. It localises to the cell membrane. The enzyme catalyses L-seryl-[protein] + ATP = O-phospho-L-seryl-[protein] + ADP + H(+). The catalysed reaction is L-threonyl-[protein] + ATP = O-phospho-L-threonyl-[protein] + ADP + H(+). Activated by pro-inflammatory cytokines and in response to physical and chemical stresses, including osmotic stress, oxidative stress, arsenic and ultraviolet light irradiation. Activated by 'Lys-63'-linked polyubiquitination and by autophosphorylation. Association with TAB1/MAP3K7IP1 and TAB2/MAP3K7IP2 promotes activation through autophosphorylation, whereas PPM1B/PP2CB, PP2A and PPP6C dephosphorylation leads to inactivation. Ceramides are also able to activate MAP3K7/TAK1. Serine/threonine kinase which acts as an essential component of the MAP kinase signal transduction pathway. Plays an important role in the cascades of cellular responses evoked by changes in the environment. Mediates signal transduction of TRAF6, various cytokines including interleukin-1 (IL-1), transforming growth factor-beta (TGFB), TGFB-related factors like BMP2 and BMP4, toll-like receptors (TLR), tumor necrosis factor receptor CD40 and B-cell receptor (BCR). Once activated, acts as an upstream activator of the MKK/JNK signal transduction cascade and the p38 MAPK signal transduction cascade through the phosphorylation and activation of several MAP kinase kinases like MAP2K1/MEK1, MAP2K3/MKK3, MAP2K6/MKK6 and MAP2K7/MKK7. These MAP2Ks in turn activate p38 MAPKs and c-jun N-terminal kinases (JNKs); both p38 MAPK and JNK pathways control the transcription factors activator protein-1 (AP-1). Independently of MAP2Ks and p38 MAPKs, acts as a key activator of NF-kappa-B by promoting activation of the I-kappa-B-kinase (IKK) core complex. Mechanistically, recruited to polyubiquitin chains of RIPK2 and IKBKG/NEMO via TAB2/MAP3K7IP2 and TAB3/MAP3K7IP3, and catalyzes phosphorylation and activation of IKBKB/IKKB component of the IKK complex, leading to NF-kappa-B activation. In osmotic stress signaling, plays a major role in the activation of MAPK8/JNK1, but not that of NF-kappa-B. Promotes TRIM5 capsid-specific restriction activity. Phosphorylates RIPK1 at 'Ser-321' which positively regulates RIPK1 interaction with RIPK3 to promote necroptosis but negatively regulates RIPK1 kinase activity and its interaction with FADD to mediate apoptosis. Phosphorylates STING1 in response to cGAMP-activation, promoting association between STEEP1 and STING1 and STING1 translocation to COPII vesicles. This chain is Mitogen-activated protein kinase kinase kinase 7 (Map3k7), found in Rattus norvegicus (Rat).